The primary structure comprises 542 residues: Chaperonin GroEL 2 (542 aa).

ATP contacts are provided by residues 30-33 (TLGP), lysine 51, 87-91 (DGTTT), glycine 415, and aspartate 496.

It belongs to the chaperonin (HSP60) family. In terms of assembly, forms a cylinder of 14 subunits composed of two heptameric rings stacked back-to-back. Interacts with the co-chaperonin GroES.

It localises to the cytoplasm. It catalyses the reaction ATP + H2O + a folded polypeptide = ADP + phosphate + an unfolded polypeptide.. Functionally, together with its co-chaperonin GroES, plays an essential role in assisting protein folding. The GroEL-GroES system forms a nano-cage that allows encapsulation of the non-native substrate proteins and provides a physical environment optimized to promote and accelerate protein folding. The chain is Chaperonin GroEL 2 from Chelativorans sp. (strain BNC1).